The following is a 541-amino-acid chain: Carotenoid-cleaving dioxygenase, mitochondrial (541 aa).

Positions 188, 248, 319, and 535 each coordinate Fe cation.

It belongs to the carotenoid oxygenase family. Fe(2+) serves as cofactor. In terms of tissue distribution, widely expressed. Detected in heart, spleen, lung, intestine, colon, stomach, kidney, bladder, and prostate. Highly expressed in liver and testis (at protein level).

The protein localises to the mitochondrion. The catalysed reaction is all-trans-beta-carotene + O2 = beta-ionone + all-trans-10'-apo-beta-carotenal. It catalyses the reaction 5-cis-lycopene + O2 = 5-cis-10'-apo-lycopenal + (3E,5E)-6,10-dimethylundeca-3,5,9-trien-2-one. The enzyme catalyses 13-cis-lycopene + O2 = 13-cis-10'-apo-lycopenal + (3E,5E)-6,10-dimethylundeca-3,5,9-trien-2-one. It carries out the reaction lutein + O2 = (3R,6R)-hydroxy-alpha-ionone + (3R)-3-hydroxy-10'-apo-beta-carotenal. The catalysed reaction is lutein + O2 = (3R,6R)-3-hydroxy-10'-apo-alpha-carotenal + (3R)-hydroxy-beta-ionone. It catalyses the reaction all-trans-zeaxanthin + 2 O2 = 4,9-dimethyldodeca-2,4,6,8,10-pentaenedial + 2 (3R)-hydroxy-beta-ionone. The enzyme catalyses all-trans-zeaxanthin + O2 = (3R)-3-hydroxy-10'-apo-beta-carotenal + (3R)-hydroxy-beta-ionone. It carries out the reaction beta-cryptoxanthin + O2 = all-trans-10'-apo-beta-carotenal + (3R)-hydroxy-beta-ionone. The catalysed reaction is all-trans-10'-apo-beta-carotenal + O2 = beta-ionone + 4,9-dimethyldodeca-2,4,6,8,10-pentaenedial. It catalyses the reaction (3R)-3-hydroxy-10'-apo-beta-carotenal + O2 = 4,9-dimethyldodeca-2,4,6,8,10-pentaenedial + (3R)-hydroxy-beta-ionone. The enzyme catalyses (3R,6R)-3-hydroxy-10'-apo-alpha-carotenal + O2 = (3R,6R)-hydroxy-alpha-ionone + 4,9-dimethyldodeca-2,4,6,8,10-pentaenedial. Its function is as follows. Broad specificity mitochondrial dioxygenase that mediates the asymmetric oxidative cleavage of carotenoids. Cleaves carotenes (pure hydrocarbon carotenoids) such as all-trans-beta-carotene and lycopene as well as xanthophylls (oxygenated carotenoids) such as zeaxanthin, lutein and beta-cryptoxanthin at both the 9,10 and the 9',10' carbon-carbon double bond. Through its function in carotenoids metabolism regulates oxidative stress and the production of important signaling molecules. The chain is Carotenoid-cleaving dioxygenase, mitochondrial from Mustela putorius furo (European domestic ferret).